Consider the following 173-residue polypeptide: Large ribosomal subunit protein bL9 (173 aa).

A disordered region spans residues Tyr-151 to Glu-173.

The protein belongs to the bacterial ribosomal protein bL9 family.

Its function is as follows. Binds to the 23S rRNA. This chain is Large ribosomal subunit protein bL9, found in Lawsonia intracellularis (strain PHE/MN1-00).